A 135-amino-acid polypeptide reads, in one-letter code: Fluoride-specific ion channel FluC 1 (135 aa).

A run of 4 helical transmembrane segments spans residues L7–L27, G32–M52, L65–V85, and W96–L116. G75 and T78 together coordinate Na(+).

Belongs to the fluoride channel Fluc/FEX (TC 1.A.43) family.

It is found in the cell membrane. It catalyses the reaction fluoride(in) = fluoride(out). Na(+) is not transported, but it plays an essential structural role and its presence is essential for fluoride channel function. Its function is as follows. Fluoride-specific ion channel. Important for reducing fluoride concentration in the cell, thus reducing its toxicity. The sequence is that of Fluoride-specific ion channel FluC 1 from Latilactobacillus sakei subsp. sakei (strain 23K) (Lactobacillus sakei subsp. sakei).